The sequence spans 833 residues: Leucine--tRNA ligase (833 aa).

Residues 41 to 52 (PYPSGAGLHVGH) carry the 'HIGH' region motif. A 'KMSKS' region motif is present at residues 610 to 614 (KMSKS). ATP is bound at residue Lys613.

Belongs to the class-I aminoacyl-tRNA synthetase family.

Its subcellular location is the cytoplasm. The enzyme catalyses tRNA(Leu) + L-leucine + ATP = L-leucyl-tRNA(Leu) + AMP + diphosphate. This chain is Leucine--tRNA ligase, found in Streptococcus agalactiae serotype Ia (strain ATCC 27591 / A909 / CDC SS700).